Here is a 334-residue protein sequence, read N- to C-terminus: Putative B3 domain-containing protein At3g49610 (334 aa).

Disordered stretches follow at residues 69–89 and 133–178; these read ERRT…GSEK and DEFE…KFDP. 2 stretches are compositionally biased toward polar residues: residues 73–84 and 141–157; these read LGSSPTKTNTLF and KSPT…SCLM. A compositionally biased stretch (basic residues) spans 161–173; sequence KRKRYQSSGKSKK. The TF-B3 DNA-binding region spans 229-334; sequence FNKLLRNDFL…GVLCFALEKE (106 aa).

It localises to the nucleus. The protein is Putative B3 domain-containing protein At3g49610 of Arabidopsis thaliana (Mouse-ear cress).